A 355-amino-acid polypeptide reads, in one-letter code: Poly(3-hydroxyalkanoate) polymerase subunit PhaC (355 aa).

Positions 69-334 constitute an AB hydrolase-1 domain; that stretch reads PLLIVYALVN…LAFPGGHIGI (266 aa). Residue cysteine 149 is part of the active site.

The protein belongs to the PHA/PHB synthase family. Type III PhaC subfamily. As to quaternary structure, a large complex of PhaC and PhaE; the ratio of the subunits has been estimated to be from 1:1 to 4:1, with more PhaE than PhaC.

Its subcellular location is the cytoplasm. It catalyses the reaction (3R)-3-hydroxybutanoyl-CoA + [(3R)-hydroxybutanoate](n) = [(3R)-hydroxybutanoate](n+1) + CoA. Its pathway is biopolymer metabolism; poly-(R)-3-hydroxybutanoate biosynthesis. Functionally, polymerizes D(-)-3-hydroxybutyryl-CoA to create polyhydroxybutyrate (PHB) which consists of thousands of hydroxybutyrate molecules linked end to end. This subunit has catalytic activity that is enhanced 100-fold by PhaE, the non-catalytic subunit. The polypeptide is Poly(3-hydroxyalkanoate) polymerase subunit PhaC (Allochromatium vinosum (strain ATCC 17899 / DSM 180 / NBRC 103801 / NCIMB 10441 / D) (Chromatium vinosum)).